Reading from the N-terminus, the 238-residue chain is Aspartate/glutamate leucyltransferase (238 aa).

It belongs to the R-transferase family. Bpt subfamily.

The protein localises to the cytoplasm. It carries out the reaction N-terminal L-glutamyl-[protein] + L-leucyl-tRNA(Leu) = N-terminal L-leucyl-L-glutamyl-[protein] + tRNA(Leu) + H(+). The catalysed reaction is N-terminal L-aspartyl-[protein] + L-leucyl-tRNA(Leu) = N-terminal L-leucyl-L-aspartyl-[protein] + tRNA(Leu) + H(+). Its function is as follows. Functions in the N-end rule pathway of protein degradation where it conjugates Leu from its aminoacyl-tRNA to the N-termini of proteins containing an N-terminal aspartate or glutamate. The protein is Aspartate/glutamate leucyltransferase of Nitrosococcus oceani (strain ATCC 19707 / BCRC 17464 / JCM 30415 / NCIMB 11848 / C-107).